Consider the following 76-residue polypeptide: Acyl carrier protein (76 aa).

In terms of domain architecture, Carrier spans 1-76 (MDTFESVKAV…DVVAYIEANK (76 aa)). At serine 36 the chain carries O-(pantetheine 4'-phosphoryl)serine.

The protein belongs to the acyl carrier protein (ACP) family. In terms of processing, 4'-phosphopantetheine is transferred from CoA to a specific serine of apo-ACP by AcpS. This modification is essential for activity because fatty acids are bound in thioester linkage to the sulfhydryl of the prosthetic group.

Its subcellular location is the cytoplasm. It participates in lipid metabolism; fatty acid biosynthesis. Carrier of the growing fatty acid chain in fatty acid biosynthesis. The chain is Acyl carrier protein from Helicobacter hepaticus (strain ATCC 51449 / 3B1).